The following is a 94-amino-acid chain: Pyrimidine/purine nucleoside phosphorylase (94 aa).

Belongs to the nucleoside phosphorylase PpnP family.

It catalyses the reaction a purine D-ribonucleoside + phosphate = a purine nucleobase + alpha-D-ribose 1-phosphate. The enzyme catalyses adenosine + phosphate = alpha-D-ribose 1-phosphate + adenine. The catalysed reaction is cytidine + phosphate = cytosine + alpha-D-ribose 1-phosphate. It carries out the reaction guanosine + phosphate = alpha-D-ribose 1-phosphate + guanine. It catalyses the reaction inosine + phosphate = alpha-D-ribose 1-phosphate + hypoxanthine. The enzyme catalyses thymidine + phosphate = 2-deoxy-alpha-D-ribose 1-phosphate + thymine. The catalysed reaction is uridine + phosphate = alpha-D-ribose 1-phosphate + uracil. It carries out the reaction xanthosine + phosphate = alpha-D-ribose 1-phosphate + xanthine. Catalyzes the phosphorolysis of diverse nucleosides, yielding D-ribose 1-phosphate and the respective free bases. Can use uridine, adenosine, guanosine, cytidine, thymidine, inosine and xanthosine as substrates. Also catalyzes the reverse reactions. This Shigella dysenteriae serotype 1 (strain Sd197) protein is Pyrimidine/purine nucleoside phosphorylase.